The following is a 575-amino-acid chain: Regulatory protein zeste (575 aa).

Positions 1–26 (MSAQGEGGGAGGSGGGGAGSDGGGNA) are enriched in gly residues. 2 disordered regions span residues 1-53 (MSAQ…LPLT) and 151-174 (SVAS…VKVE). Residues 2 to 47 (SAQGEGGGAGGSGGGGAGSDGGGNAGQSSTGSGTVAVTNGGNSSAK) form a hydrophobic region. The span at 31–51 (TGSGTVAVTNGGNSSAKNQLP) shows a compositional bias: polar residues. The DNA-binding element occupies 48–128 (NQLPLTPRFT…WLNSRLRKQY (81 aa)). Residues 151-164 (SVASAVPQQQQQQH) show a composition bias toward low complexity.

As to quaternary structure, self-associates forming complexes of several hundred monomers.

The protein resides in the nucleus. In terms of biological role, involved in transvection phenomena (= synapsis-dependent gene expression), where the synaptic pairing of chromosomes carrying genes with which zeste interacts influences the expression of these genes. Zeste binds to DNA and stimulates transcription from a nearby promoter. The sequence is that of Regulatory protein zeste (z) from Drosophila melanogaster (Fruit fly).